A 426-amino-acid chain; its full sequence is Enolase 2 (426 aa).

Residue glutamine 163 participates in (2R)-2-phosphoglycerate binding. Glutamate 205 functions as the Proton donor in the catalytic mechanism. Mg(2+)-binding residues include aspartate 242, glutamate 285, and aspartate 312. Positions 337, 366, 367, and 388 each coordinate (2R)-2-phosphoglycerate. Lysine 337 serves as the catalytic Proton acceptor.

This sequence belongs to the enolase family. Mg(2+) is required as a cofactor.

Its subcellular location is the cytoplasm. The protein resides in the secreted. It is found in the cell surface. It carries out the reaction (2R)-2-phosphoglycerate = phosphoenolpyruvate + H2O. It functions in the pathway carbohydrate degradation; glycolysis; pyruvate from D-glyceraldehyde 3-phosphate: step 4/5. In terms of biological role, catalyzes the reversible conversion of 2-phosphoglycerate (2-PG) into phosphoenolpyruvate (PEP). It is essential for the degradation of carbohydrates via glycolysis. This is Enolase 2 from Methanospirillum hungatei JF-1 (strain ATCC 27890 / DSM 864 / NBRC 100397 / JF-1).